The primary structure comprises 163 residues: Homoaconitase small subunit (163 aa).

The protein belongs to the LeuD family. As to quaternary structure, heterodimer of HacA and HacB.

The catalysed reaction is (2R,3S)-homoisocitrate = cis-homoaconitate + H2O. The protein operates within amino-acid biosynthesis; L-lysine biosynthesis via AAA pathway; L-alpha-aminoadipate from 2-oxoglutarate: step 3/5. Its activity is regulated as follows. Is not inhibited by lysine. Catalyzes the reversible hydration of cis-homoaconitate ((Z)-but-1-ene-1,2,4-tricarboxylate) to homoisocitrate ((1R,2S)-1-hydroxybutane-1,2,4-tricarboxylate). Can catalyze neither the dehydration of (R)-homocitrate ((2R)-2-hydroxybutane-1,2,4-tricarboxylate) into cis-homoaconitate in vitro, nor the reverse reaction. Is not active toward (S)-homocitrate, cis-aconitate or citrate as substrate. The chain is Homoaconitase small subunit (hacB) from Thermus thermophilus (strain ATCC BAA-163 / DSM 7039 / HB27).